A 276-amino-acid polypeptide reads, in one-letter code: 4-hydroxy-tetrahydrodipicolinate reductase (276 aa).

16–21 (GALGKM) contributes to the NAD(+) binding site. K44 is a binding site for NADP(+). Residues 109 to 111 (GTT) and 135 to 138 (APNF) contribute to the NAD(+) site. The active-site Proton donor/acceptor is H165. H166 is a binding site for (S)-2,3,4,5-tetrahydrodipicolinate. K169 serves as the catalytic Proton donor. 175 to 176 (GT) lines the (S)-2,3,4,5-tetrahydrodipicolinate pocket.

This sequence belongs to the DapB family.

The protein localises to the cytoplasm. The enzyme catalyses (S)-2,3,4,5-tetrahydrodipicolinate + NAD(+) + H2O = (2S,4S)-4-hydroxy-2,3,4,5-tetrahydrodipicolinate + NADH + H(+). It carries out the reaction (S)-2,3,4,5-tetrahydrodipicolinate + NADP(+) + H2O = (2S,4S)-4-hydroxy-2,3,4,5-tetrahydrodipicolinate + NADPH + H(+). It participates in amino-acid biosynthesis; L-lysine biosynthesis via DAP pathway; (S)-tetrahydrodipicolinate from L-aspartate: step 4/4. Functionally, catalyzes the conversion of 4-hydroxy-tetrahydrodipicolinate (HTPA) to tetrahydrodipicolinate. This is 4-hydroxy-tetrahydrodipicolinate reductase from Thermosynechococcus vestitus (strain NIES-2133 / IAM M-273 / BP-1).